The following is a 369-amino-acid chain: 1-aminocyclopropane-1-carboxylate oxidase homolog 3 (369 aa).

The 102-residue stretch at 217 to 318 folds into the Fe2OG dioxygenase domain; sequence KGLLMLSHYY…VSVACFFTTG (102 aa). Residues His241, Asp243, and His297 each contribute to the Fe cation site.

It belongs to the iron/ascorbate-dependent oxidoreductase family. Fe cation serves as cofactor.

This is 1-aminocyclopropane-1-carboxylate oxidase homolog 3 from Arabidopsis thaliana (Mouse-ear cress).